Reading from the N-terminus, the 83-residue chain is uncharacterized protein (83 aa).

The signal sequence occupies residues 1-20 (MRRALTLAVLATCAVLPALA).

To P.denitrificans and M.extorquens MoxJ.

This is an uncharacterized protein from Paracoccus denitrificans.